The chain runs to 406 residues: Tryptophan synthase beta chain (406 aa).

Lys-99 carries the post-translational modification N6-(pyridoxal phosphate)lysine.

The protein belongs to the TrpB family. In terms of assembly, tetramer of two alpha and two beta chains. Pyridoxal 5'-phosphate serves as cofactor.

The enzyme catalyses (1S,2R)-1-C-(indol-3-yl)glycerol 3-phosphate + L-serine = D-glyceraldehyde 3-phosphate + L-tryptophan + H2O. It functions in the pathway amino-acid biosynthesis; L-tryptophan biosynthesis; L-tryptophan from chorismate: step 5/5. Functionally, the beta subunit is responsible for the synthesis of L-tryptophan from indole and L-serine. The chain is Tryptophan synthase beta chain from Brucella anthropi (strain ATCC 49188 / DSM 6882 / CCUG 24695 / JCM 21032 / LMG 3331 / NBRC 15819 / NCTC 12168 / Alc 37) (Ochrobactrum anthropi).